The following is a 413-amino-acid chain: Eukaryotic initiation factor 4A-8 (413 aa).

The Q motif signature appears at 40-68 (DSFDAMGLQENLLRGIYAYGFEKPSAIQQ). The region spanning 71 to 241 (IVPFCKGLDV…RKFMNKPVRI (171 aa)) is the Helicase ATP-binding domain. Residue 84 to 91 (AQSGTGKT) coordinates ATP. The DEAD box signature appears at 189–192 (DEAD). In terms of domain architecture, Helicase C-terminal spans 252–413 (GIKQFYVNVD…ELPSNVADLL (162 aa)).

It belongs to the DEAD box helicase family. eIF4A subfamily. In terms of assembly, eIF4F is a multi-subunit complex, the composition of which varies with external and internal environmental conditions. It is composed of at least EIF4A, EIF4E and EIF4G. In terms of tissue distribution, pollen specific.

It carries out the reaction ATP + H2O = ADP + phosphate + H(+). ATP-dependent RNA helicase which is a subunit of the eIF4F complex involved in cap recognition and is required for mRNA binding to ribosome. In the current model of translation initiation, eIF4A unwinds RNA secondary structures in the 5'-UTR of mRNAs which is necessary to allow efficient binding of the small ribosomal subunit, and subsequent scanning for the initiator codon. The protein is Eukaryotic initiation factor 4A-8 of Nicotiana tabacum (Common tobacco).